The chain runs to 152 residues: SMN complex subunit smn1 (152 aa).

The interval 26–51 is interacts with yip11/gem2; the sequence is KKYHSIEAKGGVSDPDSRLDGEKLIS. The segment at 88–110 is disordered; it reads DNKGLSDEKPETRAAETHQEFME. The span at 91 to 108 shows a compositional bias: basic and acidic residues; it reads GLSDEKPETRAAETHQEF. The segment at 130–152 is may interact with gem8; the sequence is SWYYAGYYTGLAEGLAKSEQRKD.

It belongs to the SMN family. As to quaternary structure, homooligomer; may form homodimers and homotetramers. Part of the core SMN complex at least composed of smn1, yip11/gem2, gem6, gem7 and gem8. Part of the SMN-Sm complex. Interacts with yip11/gem2; the interaction is direct. Interacts with gem8; the interaction is direct. Interacts with proteins of the Sm complex, including smn1, smb1, smd1, smd2 and smd3.

Its subcellular location is the nucleus. In terms of biological role, the SMN complex catalyzes the assembly of small nuclear ribonucleoproteins (snRNPs), the building blocks of the spliceosome, and thereby plays an important role in the splicing of cellular pre-mRNAs. Most spliceosomal snRNPs contain a common set of Sm proteins smb1, smd1, smd2, smd3, sme1, smf1 and smg1 that assemble in a heptameric protein ring on the Sm site of the small nuclear RNA to form the core snRNP (Sm core). In the cytosol, the Sm proteins smd1, smd2, sme1, smf1 and smg1 (5Sm) are trapped in an inactive 6S pICln-Sm complex by the chaperone saf5 that controls the assembly of the core snRNP. To assemble core snRNPs, the SMN complex accepts the trapped 5Sm proteins from saf5 forming an intermediate. Binding of snRNA inside 5Sm triggers eviction of the SMN complex, thereby allowing binding of smd3 and smb1 to complete assembly of the core snRNP. Within the SMN complex, smn1 acts as a structural backbone and together with yip11/gem2 it gathers the Sm complex subunits. This Schizosaccharomyces pombe (strain 972 / ATCC 24843) (Fission yeast) protein is SMN complex subunit smn1.